Reading from the N-terminus, the 447-residue chain is Asparagine--tRNA ligase (447 aa).

It belongs to the class-II aminoacyl-tRNA synthetase family. In terms of assembly, homodimer.

The protein resides in the cytoplasm. It catalyses the reaction tRNA(Asn) + L-asparagine + ATP = L-asparaginyl-tRNA(Asn) + AMP + diphosphate + H(+). The protein is Asparagine--tRNA ligase of Mycoplasma mobile (strain ATCC 43663 / 163K / NCTC 11711) (Mesomycoplasma mobile).